A 511-amino-acid chain; its full sequence is Phosphoenolpyruvate carboxylase (511 aa).

Belongs to the PEPCase type 2 family. As to quaternary structure, homotetramer. It depends on Mg(2+) as a cofactor.

The enzyme catalyses oxaloacetate + phosphate = phosphoenolpyruvate + hydrogencarbonate. Catalyzes the irreversible beta-carboxylation of phosphoenolpyruvate (PEP) to form oxaloacetate (OAA), a four-carbon dicarboxylic acid source for the tricarboxylic acid cycle. The sequence is that of Phosphoenolpyruvate carboxylase from Saccharolobus islandicus (strain L.S.2.15 / Lassen #1) (Sulfolobus islandicus).